Here is a 647-residue protein sequence, read N- to C-terminus: Leishmanolysin-like peptidase (647 aa).

Histidine 264 serves as a coordination point for Zn(2+). The active site involves glutamate 265. Residues histidine 268 and histidine 370 each coordinate Zn(2+).

This sequence belongs to the peptidase M8 family. The cofactor is Zn(2+). As to expression, expressed in all cell lines analyzed.

Its subcellular location is the cytoplasm. The protein resides in the lipid droplet. Its function is as follows. Metalloprotease. The chain is Leishmanolysin-like peptidase (LMLN) from Homo sapiens (Human).